Reading from the N-terminus, the 237-residue chain is 3-oxoacyl-[acyl-carrier-protein] reductase (237 aa).

Position 1 is an N-acetylmethionine (M1). NADP(+) is bound by residues 11–14 (SRGI) and 34–35 (RN). Residue K40 is modified to N6-acetyllysine. NADP(+) is bound by residues D56 and 83-85 (AAG). N6-acetyllysine is present on K96. Residue S135 coordinates substrate. Residues Y148, K152, and 181–183 (VHT) contribute to the NADP(+) site. The active-site Proton acceptor is Y148. N6-acetyllysine is present on K195.

The protein belongs to the short-chain dehydrogenases/reductases (SDR) family. Homotetramer (in vitro). Heterotetramer with HSD17B8; contains two molecules each of HSD17B8 and CBR4. Does not form homotetramers when HSD17B8 is coexpressed, only heterotetramers (in vitro). Detected in liver and kidney (at protein level). Displays the highest expression in neuronal and muscle tissues.

It localises to the mitochondrion matrix. The enzyme catalyses a (3R)-hydroxyacyl-[ACP] + NADP(+) = a 3-oxoacyl-[ACP] + NADPH + H(+). It carries out the reaction a quinone + NADPH + H(+) = a quinol + NADP(+). The protein operates within lipid metabolism; fatty acid biosynthesis. Its function is as follows. Component of the heterotetramer complex KAR (3-ketoacyl-[acyl carrier protein] reductase or 3-ketoacyl-[ACP] reductase) that forms part of the mitochondrial fatty acid synthase (mtFAS). Beta-subunit of the KAR heterotetramer complex, responsible for the 3-ketoacyl-ACP reductase activity of the mtFAS, reduces 3-oxoacyl-[ACP] to (3R)-hydroxyacyl-[ACP] in a NADPH-dependent manner with no chain length preference, thereby participating in mitochondrial fatty acid biosynthesis. The homotetramer has NADPH-dependent quinone reductase activity (in vitro), hence could play a role in protection against cytotoxicity of exogenous quinones. As a heterotetramer, it can also reduce 9,10-phenanthrenequinone, 1,4-benzoquinone and various other o-quinones and p-quinones (in vitro). The sequence is that of 3-oxoacyl-[acyl-carrier-protein] reductase (CBR4) from Homo sapiens (Human).